Reading from the N-terminus, the 138-residue chain is Small ribosomal subunit protein uS11c (138 aa).

The tract at residues 1 to 23 (MAKPIPRIGSRKNGRIGSRKSGR) is disordered. Basic residues predominate over residues 9–23 (GSRKNGRIGSRKSGR).

It belongs to the universal ribosomal protein uS11 family. As to quaternary structure, part of the 30S ribosomal subunit.

It is found in the plastid. Its subcellular location is the chloroplast. This is Small ribosomal subunit protein uS11c from Buxus microphylla (Littleleaf boxwood).